The chain runs to 613 residues: RNA polymerase sigma factor RpoD (613 aa).

Residues 2 to 80 form a sigma-70 factor domain-1 region; the sequence is EQNPQSQLKL…TADEDAAEAA (79 aa). The interval 176–213 is disordered; the sequence is PTATHVGSELSQEDLDDDEDEDEEDGDDDSADDDNSID. A compositionally biased stretch (acidic residues) spans 186 to 212; that stretch reads SQEDLDDDEDEDEEDGDDDSADDDNSI. Residues 379–449 are sigma-70 factor domain-2; sequence MVEANLRLVI…TRSIADQART (71 aa). The Interaction with polymerase core subunit RpoC motif lies at 403-406; the sequence is DLIQ. The interval 458-534 is sigma-70 factor domain-3; it reads ETINKLNRIS…DTTLELPLDS (77 aa). Residues 547–600 are sigma-70 factor domain-4; it reads VLAGLTAREAKVLRMRFGIDMNTDYTLEEVGKQFDVTRERIRQIEAKALRKLRH. A DNA-binding region (H-T-H motif) is located at residues 573–592; it reads LEEVGKQFDVTRERIRQIEA. The interaction with anti-sigma factors stretch occupies residues 584-599; the sequence is RERIRQIEAKALRKLR.

It belongs to the sigma-70 factor family. RpoD/SigA subfamily. In terms of assembly, interacts transiently with the RNA polymerase catalytic core formed by RpoA, RpoB, RpoC and RpoZ (2 alpha, 1 beta, 1 beta' and 1 omega subunit) to form the RNA polymerase holoenzyme that can initiate transcription. Identified in a complex containing RpoD, the RNA polymerase subunits RpoA, RpoB and RpoZ, CRP and DNA. Interacts with Rsd; this prevents interaction with the RNA polymerase catalytic core and with promoter DNA, and as a consequence, promotes transcription from promoters that require alternative sigma factors. Interacts with phage T4 AsiA; this interferes with binding to DNA and to the RNA polymerase. (Microbial infection) Interacts with Escherichia phage lambda antitermination protein Q.

The protein localises to the cytoplasm. Functionally, sigma factors are initiation factors that promote the attachment of RNA polymerase to specific initiation sites and are then released. This sigma factor is the primary sigma factor during exponential growth. Preferentially transcribes genes associated with fast growth, such as ribosomal operons, other protein-synthesis related genes, rRNA- and tRNA-encoding genes and prfB. The chain is RNA polymerase sigma factor RpoD from Escherichia coli (strain K12).